The sequence spans 130 residues: Annexin A1 (130 aa).

An Isoglutamyl lysine isopeptide (Gln-Lys) (interchain with K-?) cross-link involves residue Gln-19. Phosphoserine; by PKC is present on Ser-24. Annexin repeat units lie at residues 37-108 (FDPS…ALLK) and 109-130 (TPAQFDAEELRASMKGLGTDRR). Gly-54, Val-55, Glu-57, Lys-92, Leu-95, Glu-100, Met-122, Gly-124, Gly-126, Thr-127, and Arg-130 together coordinate Ca(2+).

It belongs to the annexin family.

It is found in the nucleus. The protein localises to the cytoplasm. Its subcellular location is the cell projection. It localises to the cilium. The protein resides in the basolateral cell membrane. It is found in the lateral cell membrane. The protein localises to the cell membrane. Its subcellular location is the apical cell membrane. It localises to the membrane. The protein resides in the early endosome. It is found in the cytoplasmic vesicle membrane. The protein localises to the endosome membrane. Its subcellular location is the secreted. It localises to the extracellular space. The protein resides in the extracellular exosome. It is found in the cytoplasmic vesicle. The protein localises to the secretory vesicle lumen. Its subcellular location is the phagocytic cup. Its function is as follows. Plays important roles in the innate immune response as effector of glucocorticoid-mediated responses and regulator of the inflammatory process. Has anti-inflammatory activity. Plays a role in glucocorticoid-mediated down-regulation of the early phase of the inflammatory response. Promotes resolution of inflammation and wound healing. Functions at least in part by activating the formyl peptide receptors and downstream signaling cascades. Promotes chemotaxis of granulocytes and monocytes via activation of the formyl peptide receptors. Contributes to the adaptive immune response by enhancing signaling cascades that are triggered by T-cell activation, regulates differentiation and proliferation of activated T-cells. Promotes the differentiation of T-cells into Th1 cells and negatively regulates differentiation into Th2 cells. Has no effect on unstimulated T-cells. Promotes rearrangement of the actin cytoskeleton, cell polarization and cell migration. Negatively regulates hormone exocytosis via activation of the formyl peptide receptors and reorganization of the actin cytoskeleton. Has high affinity for Ca(2+) and can bind up to eight Ca(2+) ions. Displays Ca(2+)-dependent binding to phospholipid membranes. Plays a role in the formation of phagocytic cups and phagosomes. Plays a role in phagocytosis by mediating the Ca(2+)-dependent interaction between phagosomes and the actin cytoskeleton. The chain is Annexin A1 (ANXA1) from Gallus gallus (Chicken).